The sequence spans 212 residues: Probable GTP-binding protein EngB (212 aa).

The EngB-type G domain occupies 27–201; sequence GGIEIAFAGR…TRILSDWYQP (175 aa). GTP contacts are provided by residues 35–42, 62–66, 80–83, 147–150, and 180–182; these read GRSNAGKS, GRTQL, DLPG, TKAD, and FSS. The Mg(2+) site is built by Ser-42 and Thr-64.

Belongs to the TRAFAC class TrmE-Era-EngA-EngB-Septin-like GTPase superfamily. EngB GTPase family. It depends on Mg(2+) as a cofactor.

Its function is as follows. Necessary for normal cell division and for the maintenance of normal septation. In Tolumonas auensis (strain DSM 9187 / NBRC 110442 / TA 4), this protein is Probable GTP-binding protein EngB.